A 208-amino-acid chain; its full sequence is Small ribosomal subunit protein uS4 (208 aa).

In terms of domain architecture, S4 RNA-binding spans 98–160 (QRLDNVVYRM…SKNNSQIVRA (63 aa)).

This sequence belongs to the universal ribosomal protein uS4 family. As to quaternary structure, part of the 30S ribosomal subunit. Contacts protein S5. The interaction surface between S4 and S5 is involved in control of translational fidelity.

In terms of biological role, one of the primary rRNA binding proteins, it binds directly to 16S rRNA where it nucleates assembly of the body of the 30S subunit. Its function is as follows. With S5 and S12 plays an important role in translational accuracy. The protein is Small ribosomal subunit protein uS4 of Sulfurimonas denitrificans (strain ATCC 33889 / DSM 1251) (Thiomicrospira denitrificans (strain ATCC 33889 / DSM 1251)).